We begin with the raw amino-acid sequence, 367 residues long: Adenine deaminase (367 aa).

Zn(2+)-binding residues include His-19, His-21, and His-209. Residue Glu-212 is the Proton donor of the active site. Asp-290 is a binding site for Zn(2+). Asp-291 is a substrate binding site.

The protein belongs to the metallo-dependent hydrolases superfamily. Adenosine and AMP deaminases family. Adenine deaminase type 2 subfamily. Zn(2+) serves as cofactor.

The protein resides in the cytoplasm. The protein localises to the nucleus. The catalysed reaction is adenine + H2O + H(+) = hypoxanthine + NH4(+). Catalyzes the hydrolytic deamination of adenine to hypoxanthine. Plays an important role in the purine salvage pathway and in nitrogen catabolism. Also exhibits a low activity towards N(6)-substituted adenines that are commonly known as the plant hormones cytokinins. This is Adenine deaminase from Schizosaccharomyces pombe (strain 972 / ATCC 24843) (Fission yeast).